The sequence spans 182 residues: UPF0316 protein BCG9842_B1857 (182 aa).

3 consecutive transmembrane segments (helical) span residues L6–V26, S32–F52, and W58–I78.

The protein belongs to the UPF0316 family.

Its subcellular location is the cell membrane. The sequence is that of UPF0316 protein BCG9842_B1857 from Bacillus cereus (strain G9842).